The following is a 339-amino-acid chain: Isopentenyl-diphosphate delta-isomerase (339 aa).

Position 7–8 (7–8 (RK)) interacts with substrate. FMN-binding positions include Ser-65, 66-68 (SMT), Ser-96, and Asn-125. A substrate-binding site is contributed by 96-98 (SQR). A substrate-binding site is contributed by Gln-160. Glu-161 provides a ligand contact to Mg(2+). FMN-binding positions include Lys-192, Thr-222, and 293–294 (AG).

The protein belongs to the IPP isomerase type 2 family. As to quaternary structure, homooctamer. Dimer of tetramers. Requires FMN as cofactor. It depends on NADPH as a cofactor. The cofactor is Mg(2+).

It localises to the cytoplasm. The catalysed reaction is isopentenyl diphosphate = dimethylallyl diphosphate. Functionally, involved in the biosynthesis of isoprenoids. Catalyzes the 1,3-allylic rearrangement of the homoallylic substrate isopentenyl (IPP) to its allylic isomer, dimethylallyl diphosphate (DMAPP). This Vibrio campbellii (strain ATCC BAA-1116) protein is Isopentenyl-diphosphate delta-isomerase.